The chain runs to 302 residues: Glutaminase (302 aa).

Residues serine 61, asparagine 111, glutamate 155, asparagine 162, tyrosine 186, tyrosine 238, and valine 256 each contribute to the substrate site.

It belongs to the glutaminase family. In terms of assembly, homotetramer.

The catalysed reaction is L-glutamine + H2O = L-glutamate + NH4(+). The sequence is that of Glutaminase from Pseudomonas aeruginosa (strain LESB58).